We begin with the raw amino-acid sequence, 340 residues long: DNA-directed RNA polymerase subunit alpha (340 aa).

Positions 1–238 are alpha N-terminal domain (alpha-NTD); the sequence is MVDPIVTKNW…EQLSIFINFD (238 aa). The segment at 255–340 is alpha C-terminal domain (alpha-CTD); that stretch reads LNENLFRSVD…AAPQGGAPKV (86 aa).

It belongs to the RNA polymerase alpha chain family. Homodimer. The RNAP catalytic core consists of 2 alpha, 1 beta, 1 beta' and 1 omega subunit. When a sigma factor is associated with the core the holoenzyme is formed, which can initiate transcription.

The catalysed reaction is RNA(n) + a ribonucleoside 5'-triphosphate = RNA(n+1) + diphosphate. DNA-dependent RNA polymerase catalyzes the transcription of DNA into RNA using the four ribonucleoside triphosphates as substrates. This Anaeromyxobacter dehalogenans (strain 2CP-1 / ATCC BAA-258) protein is DNA-directed RNA polymerase subunit alpha.